A 133-amino-acid polypeptide reads, in one-letter code: MAGGQRLKRMADSVQRELSELIRQELKDPRLGGLVTISGVKVSPDLGYADVYVTVMGRELSDDQNEVAHRETLDILNKASGFLRQELSRRIKTRITPRLRFHYDKTNAYGNYMFGLIEKAVQDLPKRESDDEE.

It belongs to the RbfA family. In terms of assembly, monomer. Binds 30S ribosomal subunits, but not 50S ribosomal subunits or 70S ribosomes.

It localises to the cytoplasm. Its function is as follows. One of several proteins that assist in the late maturation steps of the functional core of the 30S ribosomal subunit. Associates with free 30S ribosomal subunits (but not with 30S subunits that are part of 70S ribosomes or polysomes). Required for efficient processing of 16S rRNA. May interact with the 5'-terminal helix region of 16S rRNA. This Acinetobacter baumannii (strain AB307-0294) protein is Ribosome-binding factor A.